A 301-amino-acid polypeptide reads, in one-letter code: Sulfate adenylyltransferase subunit 2 (301 aa).

This sequence belongs to the PAPS reductase family. CysD subfamily. As to quaternary structure, heterodimer composed of CysD, the smaller subunit, and CysN.

The catalysed reaction is sulfate + ATP + H(+) = adenosine 5'-phosphosulfate + diphosphate. Its pathway is sulfur metabolism; hydrogen sulfide biosynthesis; sulfite from sulfate: step 1/3. Its function is as follows. With CysN forms the ATP sulfurylase (ATPS) that catalyzes the adenylation of sulfate producing adenosine 5'-phosphosulfate (APS) and diphosphate, the first enzymatic step in sulfur assimilation pathway. APS synthesis involves the formation of a high-energy phosphoric-sulfuric acid anhydride bond driven by GTP hydrolysis by CysN coupled to ATP hydrolysis by CysD. In Citrifermentans bemidjiense (strain ATCC BAA-1014 / DSM 16622 / JCM 12645 / Bem) (Geobacter bemidjiensis), this protein is Sulfate adenylyltransferase subunit 2.